The following is a 97-amino-acid chain: Kunitz-type trypsin inhibitor 1 (97 aa).

The protein belongs to the protease inhibitor I3 (leguminous Kunitz-type inhibitor) family.

Functionally, exhibits Kunitz trypsin protease inhibitor activity. The sequence is that of Kunitz-type trypsin inhibitor 1 from Selenicereus costaricensis (Red-fleshed dragon fruit).